Here is a 269-residue protein sequence, read N- to C-terminus: 2-dehydro-3-deoxyphosphooctonate aldolase (269 aa).

Belongs to the KdsA family.

Its subcellular location is the cytoplasm. The catalysed reaction is D-arabinose 5-phosphate + phosphoenolpyruvate + H2O = 3-deoxy-alpha-D-manno-2-octulosonate-8-phosphate + phosphate. It functions in the pathway carbohydrate biosynthesis; 3-deoxy-D-manno-octulosonate biosynthesis; 3-deoxy-D-manno-octulosonate from D-ribulose 5-phosphate: step 2/3. Its pathway is bacterial outer membrane biogenesis; lipopolysaccharide biosynthesis. In Chlamydia felis (strain Fe/C-56) (Chlamydophila felis), this protein is 2-dehydro-3-deoxyphosphooctonate aldolase.